A 210-amino-acid chain; its full sequence is Cell division protein FtsQ (210 aa).

The POTRA domain occupies 1 to 58; it reads LQTSEIEVFQLLGLDGSTSLIALDIDAARRKLVQLPWVEDVDIRKVYPKTVEVRLKER. Residues 8 to 25 form a helical membrane-spanning segment; it reads VFQLLGLDGSTSLIALDI.

The protein belongs to the FtsQ/DivIB family. FtsQ subfamily.

The protein localises to the cell inner membrane. In terms of biological role, essential cell division protein. This Rhizobium radiobacter (Agrobacterium tumefaciens) protein is Cell division protein FtsQ.